We begin with the raw amino-acid sequence, 150 residues long: Deoxyuridine 5'-triphosphate nucleotidohydrolase (150 aa).

Residues 69 to 71 (RSG), asparagine 82, 86 to 88 (LID), and lysine 96 contribute to the substrate site.

It belongs to the dUTPase family. Requires Mg(2+) as cofactor.

It carries out the reaction dUTP + H2O = dUMP + diphosphate + H(+). The protein operates within pyrimidine metabolism; dUMP biosynthesis; dUMP from dCTP (dUTP route): step 2/2. Functionally, this enzyme is involved in nucleotide metabolism: it produces dUMP, the immediate precursor of thymidine nucleotides and it decreases the intracellular concentration of dUTP so that uracil cannot be incorporated into DNA. The chain is Deoxyuridine 5'-triphosphate nucleotidohydrolase from Neisseria meningitidis serogroup B (strain ATCC BAA-335 / MC58).